A 332-amino-acid polypeptide reads, in one-letter code: Stage II sporulation protein B (332 aa).

Residues 1–10 (MKKRKNKKNS) show a composition bias toward basic residues. Residues 1-71 (MKKRKNKKNS…EHPDEDEFNW (71 aa)) are disordered. The span at 11–27 (KAAEKALKVTINGKEET) shows a compositional bias: basic and acidic residues. The chain crosses the membrane as a helical span at residues 112–132 (AATIAFAAVIGTGLGLFALNI). Positions 139–174 (SAPASLEDSLGSQTAKAGDTSADKQTSGAEKQAAQT) are disordered. The segment covering 161–174 (DKQTSGAEKQAAQT) has biased composition (polar residues). Positions 175–250 (EGTYKTYAVQ…SDFEAWGGKE (76 aa)) constitute an SPOR domain.

The protein localises to the cell membrane. Its activity is regulated as follows. Appears to be degraded early in engulfment, in correlation with its loss from polar septa. Its function is as follows. Facilitates the rapid and spatially regulated dissolution of septal peptidoglycan. The chain is Stage II sporulation protein B from Bacillus subtilis (strain 168).